The chain runs to 539 residues: Efflux pump roqT (539 aa).

Residues 1–25 (MEKEVATDPLPQEIPSDAPDEGGSL) form a disordered region. The next 12 helical transmembrane spans lie at 36 to 56 (VSLT…VTII), 108 to 128 (LFLF…VGLI), 133 to 153 (IAGL…AQTV), 160 to 180 (VFTA…PPLG), 191 to 211 (WCFY…LFFF), 233 to 253 (IGSF…QWGG), 262 to 282 (RIIV…AVQI), 305 to 325 (WFAI…PIWF), 338 to 360 (VMNL…LVTI), 362 to 384 (GYYN…LLST), 395 to 415 (IGYQ…PFMV), and 502 to 522 (AFYV…ALEW).

Belongs to the major facilitator superfamily. TCR/Tet family.

It is found in the membrane. In terms of biological role, efflux pump; part of the gene cluster that mediates the biosynthesis of the mycotoxins roquefortine C and meleagrin. The protein is Efflux pump roqT of Penicillium rubens (strain ATCC 28089 / DSM 1075 / NRRL 1951 / Wisconsin 54-1255) (Penicillium chrysogenum).